A 145-amino-acid chain; its full sequence is Cell division protein SepF (145 aa).

The segment covering P23–P41 has biased composition (basic and acidic residues). The segment at P23–K42 is disordered.

Belongs to the SepF family. Homodimer. Interacts with FtsZ.

It localises to the cytoplasm. Functionally, cell division protein that is part of the divisome complex and is recruited early to the Z-ring. Probably stimulates Z-ring formation, perhaps through the cross-linking of FtsZ protofilaments. Its function overlaps with FtsA. The protein is Cell division protein SepF of Caldicellulosiruptor bescii (strain ATCC BAA-1888 / DSM 6725 / KCTC 15123 / Z-1320) (Anaerocellum thermophilum).